The chain runs to 1199 residues: DNA-directed RNA polymerase subunit beta' (1199 aa).

Positions 60, 62, 75, and 78 each coordinate Zn(2+). Asp-449, Asp-451, and Asp-453 together coordinate Mg(2+). 4 residues coordinate Zn(2+): Cys-818, Cys-892, Cys-899, and Cys-902.

The protein belongs to the RNA polymerase beta' chain family. The RNAP catalytic core consists of 2 alpha, 1 beta, 1 beta' and 1 omega subunit. When a sigma factor is associated with the core the holoenzyme is formed, which can initiate transcription. Requires Mg(2+) as cofactor. Zn(2+) serves as cofactor.

The enzyme catalyses RNA(n) + a ribonucleoside 5'-triphosphate = RNA(n+1) + diphosphate. DNA-dependent RNA polymerase catalyzes the transcription of DNA into RNA using the four ribonucleoside triphosphates as substrates. The chain is DNA-directed RNA polymerase subunit beta' from Bacillus velezensis (strain DSM 23117 / BGSC 10A6 / LMG 26770 / FZB42) (Bacillus amyloliquefaciens subsp. plantarum).